Reading from the N-terminus, the 630-residue chain is Probable potassium transport system protein Kup 2 (630 aa).

The next 12 membrane-spanning stretches (helical) occupy residues Ala14–Thr34, Val56–Lys76, Val108–Thr128, Pro145–Phe165, Ala176–Ile196, Phe214–Thr234, Trp255–Leu275, Leu293–Ile313, Met352–Ala372, Tyr375–Trp395, Pro402–Ala422, and Leu427–Thr447.

Belongs to the HAK/KUP transporter (TC 2.A.72) family.

The protein resides in the cell inner membrane. It carries out the reaction K(+)(in) + H(+)(in) = K(+)(out) + H(+)(out). Functionally, transport of potassium into the cell. Likely operates as a K(+):H(+) symporter. This is Probable potassium transport system protein Kup 2 from Rhodopseudomonas palustris (strain BisA53).